The chain runs to 590 residues: Aspartate--tRNA(Asp/Asn) ligase (590 aa).

Glu-178 lines the L-aspartate pocket. The aspartate stretch occupies residues Gln-202 to Lys-205. Arg-224 is an L-aspartate binding site. Residues Arg-224 to Glu-226 and Gln-233 contribute to the ATP site. Residue His-453 coordinates L-aspartate. An ATP-binding site is contributed by Glu-487. Residue Arg-494 participates in L-aspartate binding. Gly-539–Arg-542 is an ATP binding site.

The protein belongs to the class-II aminoacyl-tRNA synthetase family. Type 1 subfamily. As to quaternary structure, homodimer.

The protein resides in the cytoplasm. The enzyme catalyses tRNA(Asx) + L-aspartate + ATP = L-aspartyl-tRNA(Asx) + AMP + diphosphate. Aspartyl-tRNA synthetase with relaxed tRNA specificity since it is able to aspartylate not only its cognate tRNA(Asp) but also tRNA(Asn). Reaction proceeds in two steps: L-aspartate is first activated by ATP to form Asp-AMP and then transferred to the acceptor end of tRNA(Asp/Asn). In Treponema denticola (strain ATCC 35405 / DSM 14222 / CIP 103919 / JCM 8153 / KCTC 15104), this protein is Aspartate--tRNA(Asp/Asn) ligase.